The sequence spans 691 residues: Ubiquitin-like domain-containing protein CIP73 (691 aa).

Residues 22-97 (IEIKIKMLDS…LHLVARHPDL (76 aa)) form the Ubiquitin-like domain. Disordered regions lie at residues 92-118 (ARHPDLTPPGSLPNHSATEPNSSTGHG), 176-203 (TGLGRTSDFTGNPSRPQPEQAGFRISSD), 264-283 (RNEERGFVSSRLSSTPEGLS), 432-473 (ASTT…ASIA), 499-554 (SVNT…SSRV), 590-624 (EIHVEDPSSQGTTAGVTSAATSSGAAQAPEAEPNV), and 645-691 (HIGR…QKME). Composition is skewed to polar residues over residues 104 to 118 (PNHSATEPNSSTGHG), 178 to 189 (LGRTSDFTGNPS), 273 to 283 (SRLSSTPEGLS), 446 to 465 (TQSASVQRNTGESSVNQTTS), and 499 to 523 (SVNTNNEQGSQPASQQHTAPHSTAE). Over residues 525–535 (TLHRQSMEDSA) the composition is skewed to basic and acidic residues. A compositionally biased stretch (polar residues) spans 536 to 554 (RNGTLPTPNTQQEPSSSRV). The span at 597-617 (SSQGTTAGVTSAATSSGAAQA) shows a compositional bias: low complexity.

In terms of assembly, interacts with CCAMK. In terms of processing, phosphorylated at the N-terminus by CCAMK. As to expression, highly epressed in roots. Expressed at very low levels in leaves and stems.

It is found in the nucleus. Its function is as follows. Involved in root nodulation. Required for root nodule organogenesis after infection by symbiotic rhizobia. Probably not involved in arbuscular mycorrhizal (AM) symbiosis. Acts downstream of CCAMK. The polypeptide is Ubiquitin-like domain-containing protein CIP73 (Lotus japonicus (Lotus corniculatus var. japonicus)).